Reading from the N-terminus, the 261-residue chain is 3'-5' ssDNA/RNA exonuclease TatD (261 aa).

Glu92, His128, and His153 together coordinate a divalent metal cation.

The protein belongs to the metallo-dependent hydrolases superfamily. TatD-type hydrolase family. TatD subfamily. As to quaternary structure, monomer. The cofactor is Mg(2+).

The protein localises to the cytoplasm. Its function is as follows. 3'-5' exonuclease that prefers single-stranded DNA and RNA. May play a role in the H(2)O(2)-induced DNA damage repair. The protein is 3'-5' ssDNA/RNA exonuclease TatD of Erwinia billingiae (strain Eb661).